Here is a 146-residue protein sequence, read N- to C-terminus: MTLGARLVAPMIILLLFIPIELVKAEVITLTPETFSDKIKEKDTAWFVKFCVPWCKHCKKLGNLWEDLGKAMEGDDEIEVGEVDCGTSRAVCTKVEIHSYPTFMLFYNGEEVSKYKGKRDVESLKAFVVEETEKAAEKAQLEDKEL.

The N-terminal stretch at 1–25 (MTLGARLVAPMIILLLFIPIELVKA) is a signal peptide. In terms of domain architecture, Thioredoxin spans 26 to 133 (EVITLTPETF…LKAFVVEETE (108 aa)). Catalysis depends on nucleophile residues Cys-55 and Cys-58. The cysteines at positions 55 and 58 are disulfide-linked.

The protein belongs to the protein disulfide isomerase family.

In terms of biological role, acts as a protein-folding catalyst that interacts with nascent polypeptides to catalyze the formation, isomerization, and reduction or oxidation of disulfide bonds. This is Protein disulfide-isomerase 5-1 (PDIL5-1) from Arabidopsis thaliana (Mouse-ear cress).